A 31-amino-acid chain; its full sequence is M-poneritoxin-Nc3b (31 aa).

The protein belongs to the ponericin-G family. As to expression, expressed by the venom gland.

Its subcellular location is the secreted. The protein localises to the target cell membrane. Membrane-perturbating peptide with a few moderate activities. It is insecticidal, since it induces reversible paralysis in insects (L.cuprina) after 1 hour, but fails to kill them. It is also antiparasitic, since it moderately inhibits the larval development of the major pathogenic nematode of ruminants (H.contortus, IC(50)=23.2 uM) and reduces the motility of adult males of the other nematode B.malayi. It does not show antibacterial activity (MIC&gt;40 uM). It is not cytotoxic to HEK293 cells and does not induce hemolysis in human erythrocytes. It does not cause an increase in intracellular calcium concentration on neuronal and epithelial cell lines. This Neoponera commutata (Large hunting ant) protein is M-poneritoxin-Nc3b.